A 156-amino-acid chain; its full sequence is MIRFLGNIEVRADAKGRVFIPATFRKQLQAASEERLIMRKDVFQDCLTLYPESVWNEELNELRSRLNKWNSKHQLIFRQFVSDVEVVTPDSNGRILIPKRYLQICNIRGDIRFIGIDNKIEIWAKERAEQPFMSPEEFGAALEEIMNDENRQDGER.

SpoVT-AbrB domains are found at residues 7-54 (NIEV…PESV) and 84-127 (VEVV…AKER).

This sequence belongs to the MraZ family. Forms oligomers.

The protein resides in the cytoplasm. Its subcellular location is the nucleoid. The chain is Transcriptional regulator MraZ from Bacteroides thetaiotaomicron (strain ATCC 29148 / DSM 2079 / JCM 5827 / CCUG 10774 / NCTC 10582 / VPI-5482 / E50).